We begin with the raw amino-acid sequence, 132 residues long: Vesicle transport protein GOT1A (132 aa).

Topologically, residues 1–16 (MISITEWQKIGVGTTG) are cytoplasmic. The helical transmembrane segment at 17–37 (FGIFFILFGMLLYFDSVLLAF) threads the bilayer. Topologically, residues 38–39 (GN) are lumenal. The helical transmembrane segment at 40-60 (LLFLTGLSLIIGLRRTFSFFF) threads the bilayer. Over 61–68 (QRHKFKGT) the chain is Cytoplasmic. Residues 69-89 (SFFLGGVVIVLLRWPLLGMCL) form a helical membrane-spanning segment. The Lumenal segment spans residues 90–100 (ETYGFFSLFRG). A helical transmembrane segment spans residues 101 to 121 (FFPVAFGFLGSASNIPFLSAL). The Cytoplasmic segment spans residues 122 to 132 (FQRLQGTSSMV).

This sequence belongs to the GOT1 family.

It is found in the golgi apparatus membrane. May be involved in fusion of ER-derived transport vesicles with the Golgi complex. This chain is Vesicle transport protein GOT1A, found in Bos taurus (Bovine).